We begin with the raw amino-acid sequence, 369 residues long: 4-hydroxy-3-methylbut-2-en-1-yl diphosphate synthase (flavodoxin) (369 aa).

Residues Cys270, Cys273, Cys305, and Glu312 each contribute to the [4Fe-4S] cluster site.

It belongs to the IspG family. The cofactor is [4Fe-4S] cluster.

The catalysed reaction is (2E)-4-hydroxy-3-methylbut-2-enyl diphosphate + oxidized [flavodoxin] + H2O + 2 H(+) = 2-C-methyl-D-erythritol 2,4-cyclic diphosphate + reduced [flavodoxin]. The protein operates within isoprenoid biosynthesis; isopentenyl diphosphate biosynthesis via DXP pathway; isopentenyl diphosphate from 1-deoxy-D-xylulose 5-phosphate: step 5/6. Functionally, converts 2C-methyl-D-erythritol 2,4-cyclodiphosphate (ME-2,4cPP) into 1-hydroxy-2-methyl-2-(E)-butenyl 4-diphosphate. This Pseudomonas syringae pv. syringae (strain B728a) protein is 4-hydroxy-3-methylbut-2-en-1-yl diphosphate synthase (flavodoxin).